The following is a 656-amino-acid chain: Pumilio homology domain family member 6 (656 aa).

The tract at residues 1-107 (MAPLTKKTNG…GGENGNHTEQ (107 aa)) is disordered. Residues 13-23 (SAKEVSHSEKK) are compositionally biased toward basic and acidic residues. Ser31, Ser34, and Ser35 each carry phosphoserine; by CK2. Phosphoserine is present on residues Ser34 and Ser35. The segment covering 52-89 (SDDDDLDDLSTSDSEAEEEADELDISDDSEEHENENEE) has biased composition (acidic residues). Positions 90–107 (KEGKDKSEGGENGNHTEQ) are enriched in basic and acidic residues. The region spanning 133–483 (RLRVKTPPLP…ELLSKFAPMF (351 aa)) is the PUM-HD domain. 6 Pumilio repeats span residues 155–191 (ELSK…QIVD), 192–227 (ALKG…TIIN), 228–264 (ELHG…QMIK), 340–376 (ELLH…LILK), 377–413 (ALKN…KTFS), and 415–450 (TVKE…PIVK).

The protein belongs to the PUF6 family. Component of the ASH1 mRNP composed of at least PUF6, SHE2, SHE3, SHE1 and the ASH1 mRNA. Interacts with SHE2 and FUN12. Post-translationally, phosphorylation by CK2 relieves translational repression activity.

It localises to the bud tip. The protein localises to the nucleus. The protein resides in the nucleolus. Functionally, RNA-binding protein involved in post-transcriptional regulation. Component of the ASH1 mRNP which transports the ASH1 mRNA to the distal tip of the bud, where the ASH1 protein is translated and targeted to the daughter cell nucleus. Binds to the ASH1 3'-UTR containing the PUF consensus UUGU segment and represses its translation. This silencing of ASH1 mRNA is critical for asymmetric seggregation of ASH1 to the daughter cell nucleus. This Saccharomyces cerevisiae (strain ATCC 204508 / S288c) (Baker's yeast) protein is Pumilio homology domain family member 6 (PUF6).